The sequence spans 794 residues: MNIDDKLEGLFLKCGGIDEMQSSRAMVVMGGVSGQSTVSGELQESVLQDRSMPHQEILAADEVLQESEMRQQDMISHDELMVHEETVKNDEEQMETHERLPQGLQYALNVPISVKQEITFTDVSEQLMRDKKQIREPVDLQKKKKRKQRSPAKILTINEDGSLGLKTPKSHVCEHCNAAFRTNYHLQRHVFIHTGEKPFQCSQCDMRFIQKYLLQRHEKIHTGEKPFRCDECGMRFIQKYHMERHKRTHSGEKPYQCEYCLQYFSRTDRVLKHKRMCHENHDKKLNRCAIKGGLLTSEEDSGFSTSPKDNSLPKKKRQKTEKKSSGMDKESSLDKSDLKKDKNDYLPLYSSSTKVKDEYMVAEYAVEMPHSSVGGSHLEDASGEIHPPKLVLKKINSKRSLKQPLEQNQTISPLSTYEESKVSKYAFELVDKQALLDSEGNADIDQVDNLQEGPSKPVHSSTNYDDAMQFLKKKRYLQAASNNSREYALNVGTIASQPSVTQAAVASVIDESTTASILDSQALNVEIKSNHDKNVIPDEVLQTLLDHYSHKANGQHEISFSVADTEVTSSISINSSEVPEVTQSENVGSSSQASSSDKANMLQEYSKFLQQALDRTSQNDAYLNSPSLNFVTDNQTLPNQPAFSSIDKQVYATMPINSFRSGMNSPLRTTPDKSHFGLIVGDSQHSFPFSGDETNHASATSTQDFLDQVTSQKKAEAQPVHQAYQMSSFEQPFRAPYHGSRAGIATQFSTANGQVNLRGPGTSAEFPEFPLVNVNDNRAGMTSSPDATTGQTFG.

A Glycyl lysine isopeptide (Lys-Gly) (interchain with G-Cter in SUMO2) cross-link involves residue Lys6. A Phosphoserine modification is found at Ser51. Glycyl lysine isopeptide (Lys-Gly) (interchain with G-Cter in SUMO2) cross-links involve residues Lys88, Lys115, and Lys132. Residues 171–193 form a C2H2-type 1 zinc finger; sequence HVCEHCNAAFRTNYHLQRHVFIH. Residue Thr194 is modified to Phosphothreonine. C2H2-type zinc fingers lie at residues 199–221 and 227–249; these read FQCS…EKIH and FRCD…KRTH. Ser250 carries the phosphoserine modification. The C2H2-type 4 zinc finger occupies 255–278; it reads YQCEYCLQYFSRTDRVLKHKRMCH. Lys291 participates in a covalent cross-link: Glycyl lysine isopeptide (Lys-Gly) (interchain with G-Cter in SUMO2). The segment at 298 to 338 is disordered; it reads EEDSGFSTSPKDNSLPKKKRQKTEKKSSGMDKESSLDKSDL. Residues Ser301 and Ser306 each carry the phosphoserine modification. Residue Lys308 forms a Glycyl lysine isopeptide (Lys-Gly) (interchain with G-Cter in SUMO2) linkage. Residues 321 to 338 are compositionally biased toward basic and acidic residues; sequence EKKSSGMDKESSLDKSDL. Residue Lys356 forms a Glycyl lysine isopeptide (Lys-Gly) (interchain with G-Cter in SUMO1); alternate linkage. A Glycyl lysine isopeptide (Lys-Gly) (interchain with G-Cter in SUMO2); alternate cross-link involves residue Lys356. A Glycyl lysine isopeptide (Lys-Gly) (interchain with G-Cter in SUMO2) cross-link involves residue Lys402. A Phosphoserine modification is found at Ser412. Glycyl lysine isopeptide (Lys-Gly) (interchain with G-Cter in SUMO2) cross-links involve residues Lys421 and Lys424. A compositionally biased stretch (polar residues) spans 575-588; the sequence is SSEVPEVTQSENVG. Residues 575–596 are disordered; the sequence is SSEVPEVTQSENVGSSSQASSS. Lys607 bears the N6-acetyllysine mark. A phosphoserine mark is found at Ser665 and Ser784. Positions 775–794 are disordered; sequence NDNRAGMTSSPDATTGQTFG.

The protein belongs to the krueppel C2H2-type zinc-finger protein family. Interacts with HNRNPDL. Interacts with the 5FMC complex; the interaction requires association with CHTOP. Interacts with CAVIN1. In terms of processing, sumoylated with SUMO2. Desumoylated by SENP3, resulting in the stimulation of transcription of its target genes.

It localises to the nucleus. Its function is as follows. Involved in transcriptional regulation. Represses the transcription of a number of genes including gastrin, stromelysin and enolase. Binds to the G-rich box in the enhancer region of these genes. The polypeptide is Zinc finger protein 148 (ZNF148) (Bos taurus (Bovine)).